A 211-amino-acid polypeptide reads, in one-letter code: Protein-methionine-sulfoxide reductase heme-binding subunit MsrQ (211 aa).

The next 5 helical transmembrane spans lie at 17–37 (LAGLLPFLWLVWAINHGGLGA), 54–74 (FLLATLLITPLARYVKQPLLI), 82–102 (LWCFAWATLHLTSYALLELGV), 116–136 (PYLTLGIISWVILLALAFTST), and 153–173 (FVYLVAILAPIHYLWSVKIIS).

Belongs to the MsrQ family. As to quaternary structure, heterodimer of a catalytic subunit (MsrP) and a heme-binding subunit (MsrQ). It depends on FMN as a cofactor. Heme b serves as cofactor.

The protein resides in the cell inner membrane. In terms of biological role, part of the MsrPQ system that repairs oxidized periplasmic proteins containing methionine sulfoxide residues (Met-O), using respiratory chain electrons. Thus protects these proteins from oxidative-stress damage caused by reactive species of oxygen and chlorine generated by the host defense mechanisms. MsrPQ is essential for the maintenance of envelope integrity under bleach stress, rescuing a wide series of structurally unrelated periplasmic proteins from methionine oxidation, including the primary periplasmic chaperone SurA and the lipoprotein Pal. MsrQ provides electrons for reduction to the reductase catalytic subunit MsrP, using the quinone pool of the respiratory chain. The protein is Protein-methionine-sulfoxide reductase heme-binding subunit MsrQ of Escherichia coli (strain SMS-3-5 / SECEC).